The sequence spans 100 residues: Integration host factor subunit alpha (100 aa).

Belongs to the bacterial histone-like protein family. As to quaternary structure, heterodimer of an alpha and a beta chain.

Its function is as follows. This protein is one of the two subunits of integration host factor, a specific DNA-binding protein that functions in genetic recombination as well as in transcriptional and translational control. Involved in hydrogenase gene expression. In Rhodobacter capsulatus (Rhodopseudomonas capsulata), this protein is Integration host factor subunit alpha (ihfA).